The primary structure comprises 101 residues: MAKQSMIARDVKRAKLADKFYAKREELKKIISDANSSDEHRWAAVLKLQTLPRDSSPSRQRNRCRQTGRPHGVLRKFGLSRIKVREAAMRGEIPGLKKASW.

Belongs to the universal ribosomal protein uS14 family. In terms of assembly, part of the 30S ribosomal subunit. Contacts proteins S3 and S10.

Its function is as follows. Binds 16S rRNA, required for the assembly of 30S particles and may also be responsible for determining the conformation of the 16S rRNA at the A site. The sequence is that of Small ribosomal subunit protein uS14 from Actinobacillus pleuropneumoniae serotype 3 (strain JL03).